Here is a 297-residue protein sequence, read N- to C-terminus: Band 7 protein AAEL010189 (297 aa).

Positions Met1–Pro13 are enriched in polar residues. The tract at residues Met1–Glu30 is disordered. A helical membrane pass occupies residues Ile37–Cys57.

It belongs to the band 7/mec-2 family.

It is found in the membrane. This is Band 7 protein AAEL010189 from Aedes aegypti (Yellowfever mosquito).